Here is a 184-residue protein sequence, read N- to C-terminus: Large ribosomal subunit protein uL6 (184 aa).

Belongs to the universal ribosomal protein uL6 family. Part of the 50S ribosomal subunit.

Its function is as follows. This protein binds to the 23S rRNA, and is important in its secondary structure. It is located near the subunit interface in the base of the L7/L12 stalk, and near the tRNA binding site of the peptidyltransferase center. In Pseudothermotoga lettingae (strain ATCC BAA-301 / DSM 14385 / NBRC 107922 / TMO) (Thermotoga lettingae), this protein is Large ribosomal subunit protein uL6.